A 262-amino-acid polypeptide reads, in one-letter code: Type III pantothenate kinase (262 aa).

6-13 is a binding site for ATP; that stretch reads DVGNTNAV. Residues Tyr100 and 107-110 each bind substrate; that span reads GADR. Asp109 functions as the Proton acceptor in the catalytic mechanism. Asp129 is a binding site for K(+). Residue Thr132 coordinates ATP. Thr184 contributes to the substrate binding site.

The protein belongs to the type III pantothenate kinase family. Homodimer. NH4(+) is required as a cofactor. It depends on K(+) as a cofactor.

The protein localises to the cytoplasm. The catalysed reaction is (R)-pantothenate + ATP = (R)-4'-phosphopantothenate + ADP + H(+). It participates in cofactor biosynthesis; coenzyme A biosynthesis; CoA from (R)-pantothenate: step 1/5. In terms of biological role, catalyzes the phosphorylation of pantothenate (Pan), the first step in CoA biosynthesis. In Bacillus cereus (strain G9842), this protein is Type III pantothenate kinase.